A 294-amino-acid chain; its full sequence is Phosphatidylserine decarboxylase proenzyme (294 aa).

Active-site charge relay system; for autoendoproteolytic cleavage activity residues include D100, H157, and S261. The active-site Schiff-base intermediate with substrate; via pyruvic acid; for decarboxylase activity is S261. Residue S261 is modified to Pyruvic acid (Ser); by autocatalysis.

Belongs to the phosphatidylserine decarboxylase family. PSD-B subfamily. Prokaryotic type I sub-subfamily. Heterodimer of a large membrane-associated beta subunit and a small pyruvoyl-containing alpha subunit. Pyruvate serves as cofactor. Is synthesized initially as an inactive proenzyme. Formation of the active enzyme involves a self-maturation process in which the active site pyruvoyl group is generated from an internal serine residue via an autocatalytic post-translational modification. Two non-identical subunits are generated from the proenzyme in this reaction, and the pyruvate is formed at the N-terminus of the alpha chain, which is derived from the carboxyl end of the proenzyme. The autoendoproteolytic cleavage occurs by a canonical serine protease mechanism, in which the side chain hydroxyl group of the serine supplies its oxygen atom to form the C-terminus of the beta chain, while the remainder of the serine residue undergoes an oxidative deamination to produce ammonia and the pyruvoyl prosthetic group on the alpha chain. During this reaction, the Ser that is part of the protease active site of the proenzyme becomes the pyruvoyl prosthetic group, which constitutes an essential element of the active site of the mature decarboxylase.

The protein localises to the cell membrane. It carries out the reaction a 1,2-diacyl-sn-glycero-3-phospho-L-serine + H(+) = a 1,2-diacyl-sn-glycero-3-phosphoethanolamine + CO2. It participates in phospholipid metabolism; phosphatidylethanolamine biosynthesis; phosphatidylethanolamine from CDP-diacylglycerol: step 2/2. Catalyzes the formation of phosphatidylethanolamine (PtdEtn) from phosphatidylserine (PtdSer). This is Phosphatidylserine decarboxylase proenzyme from Histophilus somni (strain 129Pt) (Haemophilus somnus).